Consider the following 600-residue polypeptide: 69 kDa paraflagellar rod protein (600 aa).

The tract at residues Asp335–Gly355 is calmodulin-binding.

In terms of assembly, heterodimer of a 69 kDa and a 73 kDa protein.

Its subcellular location is the cell projection. It is found in the cilium. It localises to the flagellum. The protein resides in the cytoplasm. The protein localises to the cytoskeleton. Its function is as follows. Major component of the paraflagellar rod (PFR). The PFR is a highly ordered lattices of fibrous proteins that are located inside the flagellum and assume a fixed orientation with respect to the microtubular axoneme. This chain is 69 kDa paraflagellar rod protein (PFRA), found in Trypanosoma brucei brucei.